The following is a 96-amino-acid chain: Protein RSI-1 (96 aa).

The first 29 residues, M1–G29, serve as a signal peptide directing secretion.

This sequence belongs to the GASA family. Post-translationally, six disulfide bonds may be present. As to expression, expressed very early in lateral root development.

The protein resides in the secreted. The protein is Protein RSI-1 (RSI-1) of Solanum lycopersicum (Tomato).